Reading from the N-terminus, the 274-residue chain is Trehalose transport system permease protein SugB (274 aa).

The next 6 membrane-spanning stretches (helical) occupy residues 8–28 (YWAV…LWIF), 70–90 (IGIG…AAYA), 102–122 (LIGA…TPLF), 137–157 (LILP…SAFF), 182–202 (VIVP…FIFA), and 239–259 (GSIA…VLIF). The region spanning 66–259 (LINSIGIGLI…IPIIVFVLIF (194 aa)) is the ABC transmembrane type-1 domain.

This sequence belongs to the binding-protein-dependent transport system permease family. In terms of assembly, the complex is composed of two ATP-binding proteins (SugC), two transmembrane proteins (Suga and SugB) and a solute-binding protein (LpqY).

It is found in the cell inner membrane. Its function is as follows. Part of the ABC transporter complex LpqY-SugA-SugB-SugC, which is highly specific for uptake of trehalose. Involved in the recycling of extracellular trehalose released from trehalose-containing molecules synthesized by M.tuberculosis. Trehalose uptake is essential for virulence. Probably responsible for the translocation of the substrate across the membrane. The polypeptide is Trehalose transport system permease protein SugB (sugB) (Mycobacterium tuberculosis (strain CDC 1551 / Oshkosh)).